The primary structure comprises 569 residues: CTP synthase (569 aa).

Residues 313–569 (RIAMVGKYTG…NASLERLKKM (257 aa)) form the Glutamine amidotransferase type-1 domain. The active-site Nucleophile is the Cys410. Residues His541 and Glu543 contribute to the active site.

Belongs to the CTP synthase family.

The enzyme catalyses UTP + L-glutamine + ATP + H2O = CTP + L-glutamate + ADP + phosphate + 2 H(+). The protein operates within pyrimidine metabolism; CTP biosynthesis via de novo pathway; CTP from UDP: step 2/2. Functionally, catalyzes the ATP-dependent amination of UTP to CTP with either L-glutamine or ammonia as the source of nitrogen. The chain is CTP synthase (ctps) from Dictyostelium discoideum (Social amoeba).